Reading from the N-terminus, the 321-residue chain is Olfactory receptor 3A2 (321 aa).

At methionine 1–valine 35 the chain is on the extracellular side. Asparagine 14 carries N-linked (GlcNAc...) asparagine glycosylation. Residues valine 36 to valine 58 form a helical membrane-spanning segment. At leucine 59–alanine 66 the chain is on the cytoplasmic side. A helical transmembrane segment spans residues proline 67–proline 88. Residues alanine 89–glutamine 109 are Extracellular-facing. Cysteine 106 and cysteine 198 are oxidised to a cystine. Residues leucine 110–tyrosine 129 form a helical membrane-spanning segment. The Cytoplasmic portion of the chain corresponds to aspartate 130 to valine 149. A helical membrane pass occupies residues glutamine 150–threonine 167. Over histidine 168–glutamate 205 the chain is Extracellular. The chain crosses the membrane as a helical span at residues leucine 206–histidine 229. At valine 230–alanine 246 the chain is on the cytoplasmic side. Residues phenylalanine 247–arginine 270 form a helical membrane-spanning segment. Residues leucine 271–lysine 281 lie on the Extracellular side of the membrane. The chain crosses the membrane as a helical span at residues glycine 282–leucine 301. Residues arginine 302–threonine 321 are Cytoplasmic-facing.

The protein belongs to the G-protein coupled receptor 1 family.

Its subcellular location is the cell membrane. Its function is as follows. Odorant receptor. The sequence is that of Olfactory receptor 3A2 (OR3A2) from Homo sapiens (Human).